Consider the following 353-residue polypeptide: Aliphatic aldoxime dehydratase (353 aa).

An an aliphatic aldoxime-binding site is contributed by Ser219. His299 serves as a coordination point for heme b. His320 serves as a coordination point for an aliphatic aldoxime. His320 is an active-site residue.

Belongs to the heme-containing dehydratase family. In terms of assembly, homodimer. Heme b is required as a cofactor.

It carries out the reaction an aliphatic aldoxime = a nitrile + H2O. With respect to regulation, active when the heme iron is in the ferrous state. The activity is enhanced by reducing agents, such as Na(2)S, Na(2)S(2)(O4), 2-mercaptoethanol, and L-cysteine and supplementary additions of electron acceptors such as flavins, sulfite ion, and vitamin K3. The effect of various chemicals on the enzyme activity is different in the presence and absence of the reducing reagent, Na(2)S, which acts not only as a reductant but also changes the substrate specificity of the enzyme. Catalyzes the dehydration of aldoximes to their corresponding nitrile. Is active toward various arylalkyl- and alkyl-aldoximes, and to a lesser extent toward aryl-aldoximes. This Rhodococcus erythropolis (Arthrobacter picolinophilus) protein is Aliphatic aldoxime dehydratase.